The sequence spans 395 residues: Ribosomal RNA large subunit methyltransferase I (395 aa).

Positions 2-79 (SSRVTLHPGR…QNESVDNGFF (78 aa)) constitute a PUA domain.

The protein belongs to the methyltransferase superfamily. RlmI family.

It localises to the cytoplasm. The catalysed reaction is cytidine(1962) in 23S rRNA + S-adenosyl-L-methionine = 5-methylcytidine(1962) in 23S rRNA + S-adenosyl-L-homocysteine + H(+). Functionally, specifically methylates the cytosine at position 1962 (m5C1962) of 23S rRNA. The sequence is that of Ribosomal RNA large subunit methyltransferase I from Pseudoalteromonas atlantica (strain T6c / ATCC BAA-1087).